We begin with the raw amino-acid sequence, 349 residues long: Ferredoxin--NADP reductase 3 (349 aa).

The FAD site is built by Glu-34, Lys-42, Tyr-46, Val-86, Ile-120, Asp-287, and Ser-328.

It belongs to the ferredoxin--NADP reductase type 2 family. As to quaternary structure, homodimer. It depends on FAD as a cofactor.

The catalysed reaction is 2 reduced [2Fe-2S]-[ferredoxin] + NADP(+) + H(+) = 2 oxidized [2Fe-2S]-[ferredoxin] + NADPH. The sequence is that of Ferredoxin--NADP reductase 3 from Lysinibacillus sphaericus (strain C3-41).